The sequence spans 249 residues: 23S rRNA (guanosine-2'-O-)-methyltransferase RlmB (249 aa).

Positions 197, 217, and 226 each coordinate S-adenosyl-L-methionine.

Belongs to the class IV-like SAM-binding methyltransferase superfamily. RNA methyltransferase TrmH family. RlmB subfamily.

The protein localises to the cytoplasm. It carries out the reaction guanosine(2251) in 23S rRNA + S-adenosyl-L-methionine = 2'-O-methylguanosine(2251) in 23S rRNA + S-adenosyl-L-homocysteine + H(+). Its function is as follows. Specifically methylates the ribose of guanosine 2251 in 23S rRNA. The protein is 23S rRNA (guanosine-2'-O-)-methyltransferase RlmB of Ralstonia nicotianae (strain ATCC BAA-1114 / GMI1000) (Ralstonia solanacearum).